The chain runs to 255 residues: NAD kinase (255 aa).

Asp44 serves as the catalytic Proton acceptor. Residues 44-45 (DG), 114-115 (NE), Asp144, Ala152, and 155-160 (TAYNLS) each bind NAD(+).

The protein belongs to the NAD kinase family. Requires a divalent metal cation as cofactor.

Its subcellular location is the cytoplasm. The catalysed reaction is NAD(+) + ATP = ADP + NADP(+) + H(+). In terms of biological role, involved in the regulation of the intracellular balance of NAD and NADP, and is a key enzyme in the biosynthesis of NADP. Catalyzes specifically the phosphorylation on 2'-hydroxyl of the adenosine moiety of NAD to yield NADP. This Hyphomonas neptunium (strain ATCC 15444) protein is NAD kinase.